The following is a 383-amino-acid chain: tRNA(Met) cytidine acetate ligase (383 aa).

Residues 7 to 20 (IAEF…HEFL), G101, N153, and 178 to 179 (RI) contribute to the ATP site.

It belongs to the TmcAL family.

The protein resides in the cytoplasm. The enzyme catalyses cytidine(34) in elongator tRNA(Met) + acetate + ATP = N(4)-acetylcytidine(34) in elongator tRNA(Met) + AMP + diphosphate. Catalyzes the formation of N(4)-acetylcytidine (ac(4)C) at the wobble position of elongator tRNA(Met), using acetate and ATP as substrates. First activates an acetate ion to form acetyladenylate (Ac-AMP) and then transfers the acetyl group to tRNA to form ac(4)C34. This Lactobacillus helveticus (strain DPC 4571) protein is tRNA(Met) cytidine acetate ligase.